The sequence spans 342 residues: Nucleoid-associated protein Shewana3_2426 (342 aa).

The protein belongs to the YejK family.

Its subcellular location is the cytoplasm. It is found in the nucleoid. The chain is Nucleoid-associated protein Shewana3_2426 from Shewanella sp. (strain ANA-3).